Reading from the N-terminus, the 120-residue chain is Large ribosomal subunit protein eL8 (120 aa).

This sequence belongs to the eukaryotic ribosomal protein eL8 family. In terms of assembly, part of the 50S ribosomal subunit. Probably part of the RNase P complex.

The protein resides in the cytoplasm. Multifunctional RNA-binding protein that recognizes the K-turn motif in ribosomal RNA, the RNA component of RNase P, box H/ACA, box C/D and box C'/D' sRNAs. The protein is Large ribosomal subunit protein eL8 of Methanosarcina acetivorans (strain ATCC 35395 / DSM 2834 / JCM 12185 / C2A).